A 381-amino-acid polypeptide reads, in one-letter code: Putative acyl-CoA dehydrogenase YdbM (381 aa).

FAD-binding positions include 158 to 160 (FTT) and 337 to 341 (RIVGA).

This sequence belongs to the acyl-CoA dehydrogenase family. FAD serves as cofactor.

In Bacillus subtilis (strain 168), this protein is Putative acyl-CoA dehydrogenase YdbM (ydbM).